Here is a 567-residue protein sequence, read N- to C-terminus: Vacuolar fusion protein MON1 homolog (567 aa).

Disordered regions lie at residues 1 to 52 (MDMD…DDEG) and 65 to 129 (TSAS…DDTS). Residues 7-19 (TNNPSPPGPPDSP) are compositionally biased toward pro residues. Residues 43–52 (DDYDDDDDEG) show a composition bias toward acidic residues.

This sequence belongs to the MON1/SAND family. Interacts with CCZ1A, CCZ1B and RABF2B.

The protein localises to the endosome. The protein resides in the prevacuolar compartment. Plays an important role in membrane trafficking through the secretory apparatus. In complex with CCZ1, acts as a guanine exchange factor (GEF) for Rab7 protein family. Promotes the exchange of GDP to GTP, converting it from an inactive GDP-bound form into an active GTP-bound form. The active form is involved in protein trafficking from prevacuolar compartments (PVCs) to vacuoles. May serve as a linker between Rab5 and Rab7 protein families in PVCs and mediate PVC maturation. This chain is Vacuolar fusion protein MON1 homolog, found in Oryza sativa subsp. japonica (Rice).